The primary structure comprises 152 residues: Natriuretic peptides A (152 aa).

Residues 1 to 24 form the signal peptide; it reads MGSSAITTSFLLFVAFQLPGQTGA. Propeptides lie at residues 25-122 and 92-102; these read NPVY…TAPR and EMGAPSDGDPG. The segment at 50 to 108 is disordered; that stretch reads MPLEDEAVPSQVLSEQNEEAGAPLSPLSEVPPWDGGRSTQPREMGAPSDGDPGNPPRSV. Residue serine 128 is modified to Phosphoserine. Cysteine 129 and cysteine 145 form a disulfide bridge. Positions 146-150 are important for degradation of atrial natriuretic peptide by IDE; the sequence is NSFRY.

This sequence belongs to the natriuretic peptide family. Homodimer; disulfide-linked antiparallel dimer. In terms of processing, the precursor molecule is proteolytically cleaved by CORIN at Arg-122 to produce the atrial natriuretic peptide. Undergoes further proteolytic cleavage by unknown proteases to give rise to long-acting natriuretic peptide, vessel dilator and kaliuretic peptide. Additional processing gives rise to the auriculin and atriopeptin peptides. In the kidneys, alternative processing by an unknown protease results in the peptide urodilatin. Post-translationally, cleavage by MME initiates degradation of the factor and thereby regulates its activity. Degradation by IDE results in reduced activation of NPR1 (in vitro). During IDE degradation, the resulting products can temporarily stimulate NPR2 to produce cGMP, before the fragments are completely degraded and inactivated by IDE (in vitro). Degraded by IDE. In terms of processing, phosphorylation on Ser-128 decreases vasorelaxant activity.

Its subcellular location is the secreted. It localises to the perikaryon. It is found in the cell projection. Hormone that plays a key role in mediating cardio-renal homeostasis, and is involved in vascular remodeling and regulating energy metabolism. Acts by specifically binding and stimulating NPR1 to produce cGMP, which in turn activates effector proteins, such as PRKG1, that drive various biological responses. Regulates vasodilation, natriuresis, diuresis and aldosterone synthesis and is therefore essential for regulating blood pressure, controlling the extracellular fluid volume and maintaining the fluid-electrolyte balance. Also involved in inhibiting cardiac remodeling and cardiac hypertrophy by inducing cardiomyocyte apoptosis and attenuating the growth of cardiomyocytes and fibroblasts. Plays a role in female pregnancy by promoting trophoblast invasion and spiral artery remodeling in uterus, and thus prevents pregnancy-induced hypertension. In adipose tissue, acts in various cGMP- and PKG-dependent pathways to regulate lipid metabolism and energy homeostasis. This includes up-regulating lipid metabolism and mitochondrial oxygen utilization by activating the AMP-activated protein kinase (AMPK), and increasing energy expenditure by acting via MAPK11 to promote the UCP1-dependent thermogenesis of brown adipose tissue. Binds the clearance receptor NPR3 which removes the hormone from circulation. In terms of biological role, may have a role in cardio-renal homeostasis through regulation of natriuresis, diuresis, vasodilation, and inhibiting aldosterone synthesis. In vitro, promotes the production of cGMP and induces vasodilation. May promote natriuresis, at least in part, by enhancing prostaglandin E2 synthesis resulting in the inhibition of renal Na+-K+-ATPase. However reports on the involvement of this peptide in mammal blood volume and blood pressure homeostasis are conflicting; according to a report, in vivo it is not sufficient to activate cGMP and does not inhibit collecting duct transport nor effect diuresis and natriuresis. Appears to bind to specific receptors that are distinct from the receptors bound by atrial natriuretic peptide and vessel dilator. Possibly enhances protein excretion in urine by decreasing proximal tubular protein reabsorption. Its function is as follows. May have a role in cardio-renal homeostasis through regulation of natriuresis, diuresis, and vasodilation. In vitro, promotes the production of cGMP and induces vasodilation. May promote natriuresis, at least in part, by enhancing prostaglandin E2 synthesis resulting in the inhibition of renal Na+-K+-ATPase. However reports on the involvement of this peptide in mammal blood volume and blood pressure homeostasis are conflicting; according to a report it is not sufficient to activate cGMP and does not inhibit collecting duct transport nor effect diuresis and natriuresis. Appears to bind to specific receptors that are distinct from the receptors bound by the atrial natriuretic and long-acting natriuretic peptides. Possibly functions in protein excretion in urine by maintaining the integrity of the proximal tubules and enhancing protein excretion by decreasing proximal tubular protein reabsorption. Functionally, may have a role in cardio-renal homeostasis through regulation of diuresis and inhibiting aldosterone synthesis. In vitro, promotes the production of cGMP and induces vasodilation. May promote natriuresis, at least in part, by enhancing prostaglandin E2 synthesis resulting in the inhibition of renal Na+-K+-ATPase. May have a role in potassium excretion but not sodium excretion (natriuresis). Possibly enhances protein excretion in urine by decreasing proximal tubular protein reabsorption. Hormone produced in the kidneys that appears to be important for maintaining cardio-renal homeostasis. Mediates vasodilation, natriuresis and diuresis primarily in the renal system, in order to maintain the extracellular fluid volume and control the fluid-electrolyte balance. Specifically binds and stimulates cGMP production by renal transmembrane receptors, likely NPR1. Urodilatin not ANP, may be the natriuretic peptide responsible for the regulation of sodium and water homeostasis in the kidney. In terms of biological role, may have a role in cardio-renal homeostasis through regulation of natriuresis and vasodilation. In vivo promotes natriuresis and in vitro, vasodilates renal artery strips. Its function is as follows. May have a role in cardio-renal homeostasis through regulation of regulation of natriuresis and vasodilation. In vivo promotes natriuresis. In vitro, vasodilates intestinal smooth muscle but not smooth muscle strips. Functionally, may have a role in cardio-renal homeostasis through regulation of natriuresis and vasodilation. In vivo promotes natriuresis. In vitro, selectively vasodilates intestinal and vascular smooth muscle strips. May have a role in cardio-renal homeostasis through regulation of natriuresis and vasodilation. In vivo promotes natriuresis. In vitro, selectively vasodilates intestinal smooth muscle but not vascular smooth muscle strips. This is Natriuretic peptides A (NPPA) from Ovis aries (Sheep).